Reading from the N-terminus, the 780-residue chain is ATP-dependent 6-phosphofructokinase, muscle type (780 aa).

N-acetylthreonine is present on Thr-2. Residues Thr-2–His-390 form an N-terminal catalytic PFK domain 1 region. Residues Gly-25, Arg-88–Cys-89, and Gly-118–Ser-121 contribute to the ATP site. Residue Asp-119 participates in Mg(2+) binding. Ser-133 is subject to Phosphoserine. Residues Ser-164 to Asp-166, Arg-201, Met-208 to Arg-210, Glu-264, Arg-292, and His-298 to Arg-301 contribute to the substrate site. Catalysis depends on Asp-166, which acts as the Proton acceptor. Ser-377 carries the phosphoserine modification. The interdomain linker stretch occupies residues Ile-391 to His-401. A C-terminal regulatory PFK domain 2 region spans residues Thr-402–Ala-780. Beta-D-fructose 2,6-bisphosphate contacts are provided by residues Arg-471 and Thr-528–Asn-532. Ser-530 carries O-linked (GlcNAc) serine glycosylation. Lys-557 carries the post-translational modification N6-(2-hydroxyisobutyryl)lysine. Beta-D-fructose 2,6-bisphosphate contacts are provided by residues Arg-566, Met-573 to Gly-575, Glu-629, Arg-655, and His-661 to Gln-664. Ser-667 carries the post-translational modification Phosphoserine. Arg-735 serves as a coordination point for beta-D-fructose 2,6-bisphosphate. Ser-775 bears the Phosphoserine mark.

It belongs to the phosphofructokinase type A (PFKA) family. ATP-dependent PFK group I subfamily. Eukaryotic two domain clade 'E' sub-subfamily. As to quaternary structure, homo- and heterotetramers. Phosphofructokinase (PFK) enzyme functions as a tetramer composed of different combinations of 3 types of subunits, called PFKM (M), PFKL (L) and PFKP (P). The composition of the PFK tetramer differs according to the tissue type it is present in. The kinetic and regulatory properties of the tetrameric enzyme are dependent on the subunit composition, hence can vary across tissues. Interacts (via C-terminus) with HK1 (via N-terminal spermatogenic cell-specific region). Requires Mg(2+) as cofactor. In terms of processing, glcNAcylation decreases enzyme activity.

Its subcellular location is the cytoplasm. It carries out the reaction beta-D-fructose 6-phosphate + ATP = beta-D-fructose 1,6-bisphosphate + ADP + H(+). It functions in the pathway carbohydrate degradation; glycolysis; D-glyceraldehyde 3-phosphate and glycerone phosphate from D-glucose: step 3/4. Its activity is regulated as follows. Allosterically activated by ADP, AMP, or fructose 2,6-bisphosphate, and allosterically inhibited by ATP or citrate. Functionally, catalyzes the phosphorylation of D-fructose 6-phosphate to fructose 1,6-bisphosphate by ATP, the first committing step of glycolysis. In Equus caballus (Horse), this protein is ATP-dependent 6-phosphofructokinase, muscle type (PFKM).